Reading from the N-terminus, the 987-residue chain is Rho GTPase-activating protein 6 (987 aa).

Residues 1–21 (MSAQSLLHSVFSCSSPASGGT) are compositionally biased toward polar residues. 3 disordered regions span residues 1-60 (MSAQ…RGST), 76-117 (SRLA…SGSF), and 144-170 (GSGS…IFSS). Ser-37 carries the post-translational modification Phosphoserine. Residues 44–57 (GGCGSEMGAEGGLR) are compositionally biased toward gly residues. The segment covering 100–115 (SSFSTPSTPQEKSPSG) has biased composition (polar residues). Over residues 144–159 (GSGSASSRSPASILSS) the composition is skewed to low complexity. Ser-265 bears the Phosphoserine mark. The tract at residues 324–363 (KQNKELSSSNSSLSSTSETPNESTSPNTPEPAPRARRRGA) is disordered. Residues 328–350 (ELSSSNSSLSSTSETPNESTSPN) are compositionally biased toward low complexity. An SH3-binding motif is present at residues 344 to 354 (NESTSPNTPEP). Ser-365 carries the post-translational modification Phosphoserine. The Rho-GAP domain occupies 403–604 (LSLNPIYRQV…KMIENYEALF (202 aa)). The interval 641–676 (DILQTEVSFSMGGRHSSTDSNKASSGDISPYDNNSP) is disordered. Polar residues predominate over residues 658–676 (TDSNKASSGDISPYDNNSP). Phosphoserine occurs at positions 669, 675, 682, 713, 758, 776, 781, 790, and 824. A disordered region spans residues 709–731 (GHLSSPKSKSRESSPGPRLGKEM). Disordered regions lie at residues 825-847 (TPHI…PFLS) and 863-953 (WLQS…QDKQ). Positions 939–948 (LSSAYSLSAS) are enriched in low complexity. 2 positions are modified to phosphoserine: Ser-941 and Ser-944.

As to expression, expressed in retina and lung.

Its subcellular location is the cytoplasm. GTPase activator for the Rho-type GTPases by converting them to an inactive GDP-bound state. Could regulate the interactions of signaling molecules with the actin cytoskeleton. Promotes continuous elongation of cytoplasmic processes during cell motility and simultaneous retraction of the cell body changing the cell morphology. The sequence is that of Rho GTPase-activating protein 6 (Arhgap6) from Mus musculus (Mouse).